Reading from the N-terminus, the 437-residue chain is MTHYHFVGIKGSGMSSLAQIMHDLGHEVQGSDIENYVFTEVALRNKGIKILPFDANNIKEDMVVIQGNAFASSHEEIVRAHQLKLDVVSYNDFLGQIIDQYTSVAVTGAHGKTSTTGLLSHVMNGDKKTSFLIGDGTGMGLPESDYFAFEACEYRRHFLSYKPDYAIMTNIDFDHPDYFKDINDVFDAFQEMAHNVKKGIIAWGDDEHLRKIEADVPIYYYGFKDSDDIYAQNIQITDKGTAFDVYVDGEFYDHFLSPQYGDHTVLNALAVIAISYLEKLDVTNIKEALETFGGVKRRFNETTIANQVIVDDYAHHPREISATIETARKKYPHKEVVAVFQPHTFSRTQAFLNEFAESLSKADRVFLCEIFGSIRENTGALTIQDLIDKIEGASLINEDSINVLEQFDNAVVLFMGAGDIQKLQNAYLDKLGMKNAF.

108-114 provides a ligand contact to ATP; the sequence is GAHGKTS.

This sequence belongs to the MurCDEF family.

Its subcellular location is the cytoplasm. It catalyses the reaction UDP-N-acetyl-alpha-D-muramate + L-alanine + ATP = UDP-N-acetyl-alpha-D-muramoyl-L-alanine + ADP + phosphate + H(+). Its pathway is cell wall biogenesis; peptidoglycan biosynthesis. Its function is as follows. Cell wall formation. In Staphylococcus aureus (strain JH9), this protein is UDP-N-acetylmuramate--L-alanine ligase.